Here is a 363-residue protein sequence, read N- to C-terminus: Galanin receptor 2a (363 aa).

Residues 1 to 23 (MNASQQIHVFSSHWKVESVIISL) lie on the Extracellular side of the membrane. A helical membrane pass occupies residues 24–44 (IFSMIFLVGTVGNCLVLAVLI). Over 45-54 (RNGQMNTKST) the chain is Cytoplasmic. The chain crosses the membrane as a helical span at residues 55–75 (NLFILNLGLADLCFIVFCVPL). Residues 76–94 (QATIYTMDEWVFGAFVCKA) lie on the Extracellular side of the membrane. A disulfide bridge connects residues C92 and C169. A helical membrane pass occupies residues 95–115 (VHFIIYLTMYASIFTLAAVSL). At 116-135 (DRYLAIRYPLRSRETRTPRN) the chain is on the cytoplasmic side. A helical transmembrane segment spans residues 136–156 (ALTSISLVWALSLFFSSPYLS). Topologically, residues 157 to 179 (YYQQMDLDGTTVCIPAWSVHHRQ) are extracellular. The chain crosses the membrane as a helical span at residues 180–200 (AMDICTFIFGYLIPVLILGIT). Residues 201-230 (YARTIRYLWTSVDPMQDMSESRKAKRKVTK) lie on the Cytoplasmic side of the membrane. Residues 231 to 251 (MIIIVAVLFCLCWLPHHLVIL) form a helical membrane-spanning segment. Residues 252-268 (CMWFGHFPLNHTTYVLR) are Extracellular-facing. A helical membrane pass occupies residues 269-289 (ILSHLVAYANSCLNPIVYALV). At 290–363 (SKHFRKGFKK…TSAFMTFNVT (74 aa)) the chain is on the cytoplasmic side.

Belongs to the G-protein coupled receptor 1 family. As to expression, expressed in neurons in the ventral area of the interpeduncular nucleus (IPN) where expression often overlaps with spx1.

Its subcellular location is the membrane. In terms of biological role, receptor for the hormone galanin. Receptor for the hormones spexin-1 and spexin-2. This chain is Galanin receptor 2a, found in Danio rerio (Zebrafish).